Consider the following 447-residue polypeptide: tRNA(Ile)-lysidine synthase (447 aa).

31-36 (SGGMDS) contacts ATP.

The protein belongs to the tRNA(Ile)-lysidine synthase family.

The protein localises to the cytoplasm. It catalyses the reaction cytidine(34) in tRNA(Ile2) + L-lysine + ATP = lysidine(34) in tRNA(Ile2) + AMP + diphosphate + H(+). Ligates lysine onto the cytidine present at position 34 of the AUA codon-specific tRNA(Ile) that contains the anticodon CAU, in an ATP-dependent manner. Cytidine is converted to lysidine, thus changing the amino acid specificity of the tRNA from methionine to isoleucine. The polypeptide is tRNA(Ile)-lysidine synthase (Pseudothermotoga lettingae (strain ATCC BAA-301 / DSM 14385 / NBRC 107922 / TMO) (Thermotoga lettingae)).